The chain runs to 206 residues: Tetrathionate response regulatory protein TtrR (206 aa).

The Response regulatory domain maps to 3–117; sequence TIHLLDDDTA…PLQAALERAL (115 aa). D52 is subject to 4-aspartylphosphate. An HTH luxR-type domain is found at 134 to 194; that stretch reads QQLTPKEREL…ELIRRFEKMA (61 aa). Positions 153 to 172 form a DNA-binding region, H-T-H motif; the sequence is NREIAEAMNIAVRTVEVHRA.

Phosphorylated by TtrS.

Its subcellular location is the cytoplasm. Member of the two-component regulatory system TtrR/TtrS, which is required for synthesis of tetrathionate reductase. Positively regulates transcription of the ttrBCA operon. During mice infection, the ability to use tetrathionate as an electron acceptor is a growth advantage for S.typhimurium over the competing microbiota in the lumen of the inflamed gut. This Salmonella typhimurium (strain LT2 / SGSC1412 / ATCC 700720) protein is Tetrathionate response regulatory protein TtrR (ttrR).